Reading from the N-terminus, the 370-residue chain is Muconate cycloisomerase 1 (370 aa).

The active site involves Lys166. Residues Asp195, Glu221, and Asp246 each coordinate Mn(2+).

The protein belongs to the mandelate racemase/muconate lactonizing enzyme family. Homooctamer. Mn(2+) is required as a cofactor.

The catalysed reaction is (S)-muconolactone = cis,cis-muconate + H(+). It participates in aromatic compound metabolism; beta-ketoadipate pathway; 5-oxo-4,5-dihydro-2-furylacetate from catechol: step 2/3. Its function is as follows. Catalyzes a syn cycloisomerization. The polypeptide is Muconate cycloisomerase 1 (catB) (Acinetobacter baylyi (strain ATCC 33305 / BD413 / ADP1)).